The primary structure comprises 1051 residues: Protein ALWAYS EARLY 2 (1051 aa).

Composition is skewed to basic residues over residues 1–11 (MAPVRKSRSVN) and 27–36 (SKKNKLRKKL). The interval 1–37 (MAPVRKSRSVNKRFTNETSPRKDAGKSKKNKLRKKLS) is disordered. Residues 39–93 (KLGPQWTRLELERFYDAYRKHGQEWRRVAAAIRNSRSVDMVEALFNMNRAYLSLP) form the SANT domain. Disordered regions lie at residues 114–158 (EGSG…IGSP), 170–210 (ANGT…RKQF), 225–293 (TDAS…KDTT), 323–375 (AECN…TSGA), 397–605 (SELS…SSRS), and 948–981 (SIEHHHNPSPSNGSEPVANNDLNSQDGSEKNAQM). Residues 120–130 (GEGHDASEVPR) are compositionally biased toward basic and acidic residues. Basic residues predominate over residues 131–140 (KQQKRKRAKP). Positions 279 to 293 (ESSRERKLDSDKDTT) are enriched in basic and acidic residues. A compositionally biased stretch (acidic residues) spans 323 to 332 (AECNDSDDNG). Basic and acidic residues-rich tracts occupy residues 350-372 (AAIEASREKYSPRSPKKRDDKHT) and 403-417 (LKEERTEYDMDEKSS). A compositionally biased stretch (polar residues) spans 560–574 (KQVSDSGPTSLSQKP). Basic and acidic residues predominate over residues 586 to 597 (LQEKAKSSETTH). Residues 967–981 (NDLNSQDGSEKNAQM) are compositionally biased toward polar residues.

As to quaternary structure, interacts with SNL1 (via PAH3). In terms of tissue distribution, expressed ubiquitously in vegetative and reproductive tissues.

Its subcellular location is the nucleus. The sequence is that of Protein ALWAYS EARLY 2 (ALY2) from Arabidopsis thaliana (Mouse-ear cress).